We begin with the raw amino-acid sequence, 508 residues long: Photosystem II CP47 reaction center protein (508 aa).

6 helical membrane-spanning segments follow: residues 21–36 (SVHI…WAGS), 101–115 (IVFS…IWHW), 140–156 (GIHL…FGAF), 203–218 (IAAG…FHLS), 237–252 (VLSS…AFVV), and 457–472 (SFAL…HGAR).

The protein belongs to the PsbB/PsbC family. PsbB subfamily. In terms of assembly, PSII is composed of 1 copy each of membrane proteins PsbA, PsbB, PsbC, PsbD, PsbE, PsbF, PsbH, PsbI, PsbJ, PsbK, PsbL, PsbM, PsbT, PsbX, PsbY, PsbZ, Psb30/Ycf12, at least 3 peripheral proteins of the oxygen-evolving complex and a large number of cofactors. It forms dimeric complexes. The cofactor is Binds multiple chlorophylls. PSII binds additional chlorophylls, carotenoids and specific lipids..

It is found in the plastid. Its subcellular location is the chloroplast thylakoid membrane. Its function is as follows. One of the components of the core complex of photosystem II (PSII). It binds chlorophyll and helps catalyze the primary light-induced photochemical processes of PSII. PSII is a light-driven water:plastoquinone oxidoreductase, using light energy to abstract electrons from H(2)O, generating O(2) and a proton gradient subsequently used for ATP formation. This is Photosystem II CP47 reaction center protein from Gossypium barbadense (Sea Island cotton).